The following is a 327-amino-acid chain: Ferrochelatase (327 aa).

2 residues coordinate Fe cation: H196 and E277.

This sequence belongs to the ferrochelatase family.

The protein resides in the cytoplasm. The enzyme catalyses heme b + 2 H(+) = protoporphyrin IX + Fe(2+). Its pathway is porphyrin-containing compound metabolism; protoheme biosynthesis; protoheme from protoporphyrin-IX: step 1/1. In terms of biological role, catalyzes the ferrous insertion into protoporphyrin IX. The chain is Ferrochelatase from Gloeobacter violaceus (strain ATCC 29082 / PCC 7421).